A 345-amino-acid polypeptide reads, in one-letter code: KRR1 small subunit processome component homolog (345 aa).

The 69-residue stretch at 125-193 (DIIKIGNLVH…VRDIVLETMN (69 aa)) folds into the KH domain. A compositionally biased stretch (basic residues) spans 232 to 245 (NISKRKQPKVKKQK). Disordered regions lie at residues 232-260 (NISKRKQPKVKKQKKEYTPFPPSQPESKV) and 273-345 (QEQK…ARSS). Positions 270–298 (FLNQEQKQAKRNQERTEKQKEAAKRQDER) form a coiled coil. 2 stretches are compositionally biased toward basic and acidic residues: residues 276–302 (KQAKRNQERTEKQKEAAKRQDERRNKD) and 315–330 (RKKEDGSSSSKVDVKA). A compositionally biased stretch (basic residues) spans 331-345 (LKAKLIKANKKARSS).

It belongs to the KRR1 family. As to quaternary structure, monomer. Component of the ribosomal small subunit (SSU) processome.

It localises to the nucleus. It is found in the nucleolus. In terms of biological role, required for 40S ribosome biogenesis. Involved in nucleolar processing of pre-18S ribosomal RNA and ribosome assembly. Binds to RNA. Required for female germline development, cell viability during eye development and for survival of dividing cells and epithelial cells during early wing disk development. The chain is KRR1 small subunit processome component homolog (dbe) from Drosophila melanogaster (Fruit fly).